The primary structure comprises 363 residues: Aminomethyltransferase (363 aa).

It belongs to the GcvT family. As to quaternary structure, the glycine cleavage system is composed of four proteins: P, T, L and H.

It carries out the reaction N(6)-[(R)-S(8)-aminomethyldihydrolipoyl]-L-lysyl-[protein] + (6S)-5,6,7,8-tetrahydrofolate = N(6)-[(R)-dihydrolipoyl]-L-lysyl-[protein] + (6R)-5,10-methylene-5,6,7,8-tetrahydrofolate + NH4(+). Functionally, the glycine cleavage system catalyzes the degradation of glycine. The sequence is that of Aminomethyltransferase from Thermosipho melanesiensis (strain DSM 12029 / CIP 104789 / BI429).